We begin with the raw amino-acid sequence, 404 residues long: High affinity immunoglobulin gamma Fc receptor I (404 aa).

The signal sequence occupies residues 1–24 (MILTSFGDDMWLLTTLLLWVPVGG). Residues 25–297 (EVVNATKAVI…QVLGPQSSAP (273 aa)) lie on the Extracellular side of the membrane. N-linked (GlcNAc...) asparagine glycosylation is found at Asn28, Asn48, Asn69, Asn168, and Asn249. 3 Ig-like C2-type domains span residues 32–111 (AVIT…LQIH), 117–194 (LQAS…SITV), and 201–286 (PVLR…PELE). 3 disulfide bridges follow: Cys53/Cys95, Cys134/Cys177, and Cys221/Cys269. The chain crosses the membrane as a helical span at residues 298–320 (VWFHILFYLSVGIMFSLNTVLYV). The tract at residues 321-342 (KIHRLQREKKYNLEVPLVSEQG) is interaction with EPB41L2. The Cytoplasmic segment spans residues 321 to 404 (KIHRLQREKK…DSTGAQTSQS (84 aa)). The interval 346-404 (NSFQQVRSDGVYEEVTATASQTTPKEAPDGPRSSVGDCGPEQPEPLPPSDSTGAQTSQS) is disordered. Ser347 carries the phosphoserine modification. Phosphothreonine is present on Thr368. Residues 394 to 404 (SDSTGAQTSQS) show a composition bias toward polar residues.

The protein belongs to the immunoglobulin superfamily. FCGR1 family. Interacts with FCERG1; forms a functional signaling complex. Interacts with FLNA; prevents FCGR1A degradation. Interacts with EPB41L2, LAT and PPL. Interacts with HCK and LYN. Post-translationally, N-glycosylated. Phosphorylated on serine residues. In terms of tissue distribution, macrophage-specific.

It localises to the cell membrane. In terms of biological role, high affinity receptor for the Fc region of immunoglobulins gamma. Functions in both innate and adaptive immune responses. The polypeptide is High affinity immunoglobulin gamma Fc receptor I (Fcgr1) (Mus musculus (Mouse)).